A 197-amino-acid polypeptide reads, in one-letter code: Protein GrpE (197 aa).

Positions 1–31 are enriched in basic and acidic residues; the sequence is MSDDTKKQDTAADAEVEKEMEGVPEHLRDDR. The disordered stretch occupies residues 1–48; it reads MSDDTKKQDTAADAEVEKEMEGVPEHLRDDRGSEEDASDDLSAALESL.

This sequence belongs to the GrpE family. In terms of assembly, homodimer.

The protein localises to the cytoplasm. Functionally, participates actively in the response to hyperosmotic and heat shock by preventing the aggregation of stress-denatured proteins, in association with DnaK and GrpE. It is the nucleotide exchange factor for DnaK and may function as a thermosensor. Unfolded proteins bind initially to DnaJ; upon interaction with the DnaJ-bound protein, DnaK hydrolyzes its bound ATP, resulting in the formation of a stable complex. GrpE releases ADP from DnaK; ATP binding to DnaK triggers the release of the substrate protein, thus completing the reaction cycle. Several rounds of ATP-dependent interactions between DnaJ, DnaK and GrpE are required for fully efficient folding. The protein is Protein GrpE of Erythrobacter litoralis (strain HTCC2594).